The sequence spans 198 residues: KinB-signaling pathway activation protein (198 aa).

6 helical membrane passes run 9–29, 42–62, 90–110, 117–137, 146–166, and 173–193; these read FFFSILAVGALITSIVGFALK, AGQIFSVLFWFIGVGMIFSVI, LQLFFILFVAFDLMYVRFLFF, LAGYAWLPVFLLIFGVITAYI, TFVSSLFLMVVITALEWFPAL, and WLYLMLFPLMACNAFQLLMLP.

It is found in the cell membrane. In terms of biological role, involved in the activation of the KinB signaling pathway of sporulation. This Bacillus subtilis (strain 168) protein is KinB-signaling pathway activation protein (kbaA).